A 60-amino-acid polypeptide reads, in one-letter code: Small ribosomal subunit protein bS21 (60 aa).

A disordered region spans residues 36–60 (QFFETPQEKHKRKEATRRRQRSRRR). The span at 44-60 (KHKRKEATRRRQRSRRR) shows a compositional bias: basic residues.

Belongs to the bacterial ribosomal protein bS21 family.

This is Small ribosomal subunit protein bS21 (rpsU) from Synechocystis sp. (strain ATCC 27184 / PCC 6803 / Kazusa).